The chain runs to 125 residues: Large ribosomal subunit protein bL12 (125 aa).

This sequence belongs to the bacterial ribosomal protein bL12 family. In terms of assembly, homodimer. Part of the ribosomal stalk of the 50S ribosomal subunit. Forms a multimeric L10(L12)X complex, where L10 forms an elongated spine to which 2 to 4 L12 dimers bind in a sequential fashion. Binds GTP-bound translation factors.

Its function is as follows. Forms part of the ribosomal stalk which helps the ribosome interact with GTP-bound translation factors. Is thus essential for accurate translation. In Campylobacter jejuni subsp. jejuni serotype O:6 (strain 81116 / NCTC 11828), this protein is Large ribosomal subunit protein bL12.